Consider the following 181-residue polypeptide: UPF0398 protein lmo1889 (181 aa).

This sequence belongs to the UPF0398 family.

The sequence is that of UPF0398 protein lmo1889 from Listeria monocytogenes serovar 1/2a (strain ATCC BAA-679 / EGD-e).